Consider the following 182-residue polypeptide: Adenylate kinase (182 aa).

Glycine 12–threonine 17 contacts ATP. Positions serine 32–valine 61 are NMP. AMP-binding positions include threonine 33, arginine 38, glutamate 59–valine 61, glycine 85–arginine 88, and glutamine 92. The segment at serine 126–aspartate 132 is LID. ATP is bound at residue arginine 127. Arginine 129 and arginine 140 together coordinate AMP. Glycine 168 contributes to the ATP binding site.

Belongs to the adenylate kinase family. Monomer.

The protein localises to the cytoplasm. It catalyses the reaction AMP + ATP = 2 ADP. The protein operates within purine metabolism; AMP biosynthesis via salvage pathway; AMP from ADP: step 1/1. Catalyzes the reversible transfer of the terminal phosphate group between ATP and AMP. Plays an important role in cellular energy homeostasis and in adenine nucleotide metabolism. The polypeptide is Adenylate kinase (Prochlorococcus marinus (strain MIT 9313)).